Reading from the N-terminus, the 131-residue chain is uncharacterized protein (131 aa).

This is an uncharacterized protein from Mycobacterium tuberculosis (strain CDC 1551 / Oshkosh).